We begin with the raw amino-acid sequence, 301 residues long: Acetyl-coenzyme A carboxylase carboxyl transferase subunit beta (301 aa).

One can recognise a CoA carboxyltransferase N-terminal domain in the interval leucine 25 to alanine 294.

Belongs to the AccD/PCCB family. Acetyl-CoA carboxylase is a heterohexamer composed of biotin carboxyl carrier protein (AccB), biotin carboxylase (AccC) and two subunits each of ACCase subunit alpha (AccA) and ACCase subunit beta (AccD).

The protein localises to the cytoplasm. The catalysed reaction is N(6)-carboxybiotinyl-L-lysyl-[protein] + acetyl-CoA = N(6)-biotinyl-L-lysyl-[protein] + malonyl-CoA. It participates in lipid metabolism; malonyl-CoA biosynthesis; malonyl-CoA from acetyl-CoA: step 1/1. In terms of biological role, component of the acetyl coenzyme A carboxylase (ACC) complex. Biotin carboxylase (BC) catalyzes the carboxylation of biotin on its carrier protein (BCCP) and then the CO(2) group is transferred by the transcarboxylase to acetyl-CoA to form malonyl-CoA. This chain is Acetyl-coenzyme A carboxylase carboxyl transferase subunit beta, found in Rhizobium etli (strain CIAT 652).